Here is a 235-residue protein sequence, read N- to C-terminus: Eukaryotic translation initiation factor 4E-1 (235 aa).

Residues 16–25 (VNKHRGVRSD) are compositionally biased toward basic and acidic residues. Positions 16–56 (VNKHRGVRSDGEEDEQLEEGEIVGGDADTLSSSSSSRPGTA) are disordered. Positions 26 to 36 (GEEDEQLEEGE) are enriched in acidic residues. 2 EIF4G-binding regions span residues 60 to 63 (HPLE) and 70 to 106 (FDTPSAKSKQVAWGSSMRPIYTFSSVEEFWSLYNNIH). MRNA-binding positions include 78 to 83 (KQVAWG), Lys-110, and 128 to 129 (WE). A disulfide bridge links Cys-133 with Cys-171. The interval 154-163 (YTLLAMIGEQ) is EIF4G-binding. MRNA is bound by residues 178 to 183 (RARQEK) and 223 to 227 (KTLDR).

The protein belongs to the eukaryotic initiation factor 4E family. In terms of assembly, EIF4F is a multi-subunit complex, the composition of which varies with external and internal environmental conditions. It is composed of at least EIF4A, EIF4E and EIF4G. EIF4E is also known to interact with other partners. In higher plants two isoforms of EIF4F have been identified, named isoform EIF4F and isoform EIF(iso)4F. Isoform EIF4F has subunits p220 and p26, whereas isoform EIF(iso)4F has subunits p82 and p28. (Microbial infection) Interacts with potyvirus viral genome-linked protein (VPg); this interaction is possible in susceptible hosts but impaired in resistant plants. According to the redox status, the Cys-133-Cys-171 disulfide bridge may have a role in regulating protein function by affecting its ability to bind capped mRNA.

It localises to the nucleus. The protein resides in the cytoplasm. Its function is as follows. Component of the protein complex eIF4F, which is involved in the recognition of the mRNA cap, ATP-dependent unwinding of 5'-terminal secondary structure and recruitment of mRNA to the ribosome. Recognizes and binds the 7-methylguanosine-containing mRNA cap during an early step in the initiation of protein synthesis and facilitates ribosome binding by inducing the unwinding of the mRNAs secondary structures. Key component of recessive resistance to potyviruses. (Microbial infection) Susceptibility host factor required for viral infection by recruiting viral RNAs to the host ribosomal complex via an interaction with viral genome-linked protein (VPg). The chain is Eukaryotic translation initiation factor 4E-1 from Lactuca sativa (Garden lettuce).